The following is a 143-amino-acid chain: Small ribosomal subunit protein eS12 (143 aa).

Belongs to the eukaryotic ribosomal protein eS12 family. Component of the small ribosomal subunit. Mature ribosomes consist of a small (40S) and a large (60S) subunit. The 40S subunit contains about 32 different proteins and 1 molecule of RNA (18S). The 60S subunit contains 45 different proteins and 3 molecules of RNA (25S, 5.8S and 5S).

The protein localises to the cytoplasm. Component of the ribosome, a large ribonucleoprotein complex responsible for the synthesis of proteins in the cell. The small ribosomal subunit (SSU) binds messenger RNAs (mRNAs) and translates the encoded message by selecting cognate aminoacyl-transfer RNA (tRNA) molecules. The large subunit (LSU) contains the ribosomal catalytic site termed the peptidyl transferase center (PTC), which catalyzes the formation of peptide bonds, thereby polymerizing the amino acids delivered by tRNAs into a polypeptide chain. The nascent polypeptides leave the ribosome through a tunnel in the LSU and interact with protein factors that function in enzymatic processing, targeting, and the membrane insertion of nascent chains at the exit of the ribosomal tunnel. The polypeptide is Small ribosomal subunit protein eS12 (RPS12) (Candida albicans (strain SC5314 / ATCC MYA-2876) (Yeast)).